The following is a 427-amino-acid chain: Tol-Pal system protein TolB (427 aa).

The first 23 residues, 1 to 23 (MKLIARLMSMCAVLFFAINSAYA), serve as a signal peptide directing secretion.

The protein belongs to the TolB family. In terms of assembly, the Tol-Pal system is composed of five core proteins: the inner membrane proteins TolA, TolQ and TolR, the periplasmic protein TolB and the outer membrane protein Pal. They form a network linking the inner and outer membranes and the peptidoglycan layer.

The protein localises to the periplasm. In terms of biological role, part of the Tol-Pal system, which plays a role in outer membrane invagination during cell division and is important for maintaining outer membrane integrity. The polypeptide is Tol-Pal system protein TolB (Actinobacillus succinogenes (strain ATCC 55618 / DSM 22257 / CCUG 43843 / 130Z)).